The sequence spans 136 residues: MANLTKLKIVTPYAQNLEKDVYSVELKTSEGRIAVLPDHNPLMSIIENHVAYIRELPNAPRKPLLLLDGIVYVEEHQVRVFSDYFKFLDEIKIDEINSLLNKLKNDLANEEDDKKKLQLKSKIKLNESILIAYKDR.

The protein belongs to the ATPase epsilon chain family. As to quaternary structure, F-type ATPases have 2 components, CF(1) - the catalytic core - and CF(0) - the membrane proton channel. CF(1) has five subunits: alpha(3), beta(3), gamma(1), delta(1), epsilon(1). CF(0) has three main subunits: a, b and c.

The protein localises to the cell membrane. Produces ATP from ADP in the presence of a proton gradient across the membrane. This is ATP synthase epsilon chain from Ureaplasma urealyticum serovar 10 (strain ATCC 33699 / Western).